A 92-amino-acid chain; its full sequence is Protease inhibitors (92 aa).

An N-terminal signal peptide occupies residues 1 to 19 (MKFALALCAAVLLVVLVQA). Pacifastin domains follow at residues 20–54 (EEKC…CQPA) and 57–92 (EISC…CPNQ). 6 cysteine pairs are disulfide-bonded: C23/C38, C33/C51, C36/C46, C60/C75, C70/C89, and C73/C84. A glycan (O-linked (Fuc) threonine) is linked at T65.

The protein belongs to the protease inhibitor I19 family. Brain and fat body.

The protein localises to the secreted. Functionally, both LCMI I and II are inhibitors of chymotrypsin and elastase (in vitro). They both inhibit the prophenol oxidase activation cascade. In Locusta migratoria (Migratory locust), this protein is Protease inhibitors.